The primary structure comprises 616 residues: Probable methyltransferase PMT2 (616 aa).

The Cytoplasmic portion of the chain corresponds to 1-13 (MALKSSSADGKTR). A helical; Signal-anchor for type II membrane protein membrane pass occupies residues 14 to 34 (SSVQIFIVFSLCCFFYILGAW). Over 35 to 616 (QRSGFGKGDS…YWVTNSTSTH (582 aa)) the chain is Lumenal. N-linked (GlcNAc...) asparagine glycosylation is found at N205 and N611.

It belongs to the methyltransferase superfamily.

It is found in the golgi apparatus membrane. The sequence is that of Probable methyltransferase PMT2 from Arabidopsis thaliana (Mouse-ear cress).